The primary structure comprises 278 residues: Large ribosomal subunit protein uL2 (278 aa).

Residues 201–278 (HGNINDGKAG…IMRSRHQRKK (78 aa)) are disordered. Positions 210–221 (GRSRWRGKRPHV) are enriched in basic residues.

Belongs to the universal ribosomal protein uL2 family. In terms of assembly, part of the 50S ribosomal subunit. Forms a bridge to the 30S subunit in the 70S ribosome.

In terms of biological role, one of the primary rRNA binding proteins. Required for association of the 30S and 50S subunits to form the 70S ribosome, for tRNA binding and peptide bond formation. It has been suggested to have peptidyltransferase activity; this is somewhat controversial. Makes several contacts with the 16S rRNA in the 70S ribosome. This is Large ribosomal subunit protein uL2 from Sinorhizobium fredii (strain NBRC 101917 / NGR234).